Reading from the N-terminus, the 38-residue chain is Cytochrome b6-f complex subunit 5 (38 aa).

The helical transmembrane segment at 5–25 (LLLGIVLGLIPITLAGLFVAA) threads the bilayer.

Belongs to the PetG family. The 4 large subunits of the cytochrome b6-f complex are cytochrome b6, subunit IV (17 kDa polypeptide, PetD), cytochrome f and the Rieske protein, while the 4 small subunits are PetG, PetL, PetM and PetN. The complex functions as a dimer.

It localises to the cellular thylakoid membrane. Its function is as follows. Component of the cytochrome b6-f complex, which mediates electron transfer between photosystem II (PSII) and photosystem I (PSI), cyclic electron flow around PSI, and state transitions. PetG is required for either the stability or assembly of the cytochrome b6-f complex. The sequence is that of Cytochrome b6-f complex subunit 5 from Rippkaea orientalis (strain PCC 8801 / RF-1) (Cyanothece sp. (strain PCC 8801)).